We begin with the raw amino-acid sequence, 126 residues long: Large ribosomal subunit protein bL20 (126 aa).

Belongs to the bacterial ribosomal protein bL20 family.

In terms of biological role, binds directly to 23S ribosomal RNA and is necessary for the in vitro assembly process of the 50S ribosomal subunit. It is not involved in the protein synthesizing functions of that subunit. The chain is Large ribosomal subunit protein bL20 from Buchnera aphidicola subsp. Baizongia pistaciae (strain Bp).